Consider the following 305-residue polypeptide: Serine/threonine-protein phosphatase PP-X isozyme 1 (305 aa).

Residues Asp51, His53, Asp79, and Asn111 each coordinate Mn(2+). Catalysis depends on His112, which acts as the Proton donor. Residues His161 and His236 each contribute to the Mn(2+) site.

The protein belongs to the PPP phosphatase family. PP-4 (PP-X) subfamily. In terms of assembly, interacts with TAP46. It depends on Mn(2+) as a cofactor. As to expression, ubiquitous, mostly expressed in root mersitems, flowers, and vascular tissues.

The protein localises to the plastid stroma. The catalysed reaction is O-phospho-L-seryl-[protein] + H2O = L-seryl-[protein] + phosphate. It carries out the reaction O-phospho-L-threonyl-[protein] + H2O = L-threonyl-[protein] + phosphate. This chain is Serine/threonine-protein phosphatase PP-X isozyme 1 (PPX1), found in Arabidopsis thaliana (Mouse-ear cress).